A 114-amino-acid chain; its full sequence is T cell receptor beta variable 5-4 (114 aa).

A signal peptide spans 1–21; it reads MGPGLLCWALLCLLGAGSVET. An Ig-like domain is found at 22–114; it reads GVTQSPTHLI…SALYLCASSL (93 aa). A disulfide bridge connects residues Cys42 and Cys110. N-linked (GlcNAc...) asparagine glycosylation occurs at Asn90.

In terms of assembly, alpha-beta TR is a heterodimer composed of an alpha and beta chain; disulfide-linked. The alpha-beta TR is associated with the transmembrane signaling CD3 coreceptor proteins to form the TR-CD3 (TcR or TCR). The assembly of alpha-beta TR heterodimers with CD3 occurs in the endoplasmic reticulum where a single alpha-beta TR heterodimer associates with one CD3D-CD3E heterodimer, one CD3G-CD3E heterodimer and one CD247 homodimer forming a stable octameric structure. CD3D-CD3E and CD3G-CD3E heterodimers preferentially associate with TR alpha and TR beta chains, respectively. The association of the CD247 homodimer is the last step of TcR assembly in the endoplasmic reticulum and is required for transport to the cell surface.

It localises to the cell membrane. V region of the variable domain of T cell receptor (TR) beta chain that participates in the antigen recognition. Alpha-beta T cell receptors are antigen specific receptors which are essential to the immune response and are present on the cell surface of T lymphocytes. Recognize peptide-major histocompatibility (MH) (pMH) complexes that are displayed by antigen presenting cells (APC), a prerequisite for efficient T cell adaptive immunity against pathogens. Binding of alpha-beta TR to pMH complex initiates TR-CD3 clustering on the cell surface and intracellular activation of LCK that phosphorylates the ITAM motifs of CD3G, CD3D, CD3E and CD247 enabling the recruitment of ZAP70. In turn ZAP70 phosphorylates LAT, which recruits numerous signaling molecules to form the LAT signalosome. The LAT signalosome propagates signal branching to three major signaling pathways, the calcium, the mitogen-activated protein kinase (MAPK) kinase and the nuclear factor NF-kappa-B (NF-kB) pathways, leading to the mobilization of transcription factors that are critical for gene expression and essential for T cell growth and differentiation. The T cell repertoire is generated in the thymus, by V-(D)-J rearrangement. This repertoire is then shaped by intrathymic selection events to generate a peripheral T cell pool of self-MH restricted, non-autoaggressive T cells. Post-thymic interaction of alpha-beta TR with the pMH complexes shapes TR structural and functional avidity. This chain is T cell receptor beta variable 5-4, found in Homo sapiens (Human).